The following is a 733-amino-acid chain: Phosphoribosylformylglycinamidine synthase subunit PurL (733 aa).

Residue histidine 44 is part of the active site. 2 residues coordinate ATP: tyrosine 47 and lysine 86. Glutamate 88 serves as a coordination point for Mg(2+). Residues 89-92 (SHNH) and arginine 111 each bind substrate. The Proton acceptor role is filled by histidine 90. Aspartate 112 is a binding site for Mg(2+). A substrate-binding site is contributed by glutamine 233. Aspartate 261 contributes to the Mg(2+) binding site. 305-307 (ESQ) is a substrate binding site. Residues aspartate 492 and glycine 529 each contribute to the ATP site. Residue asparagine 530 participates in Mg(2+) binding. Serine 532 serves as a coordination point for substrate.

The protein belongs to the FGAMS family. As to quaternary structure, monomer. Part of the FGAM synthase complex composed of 1 PurL, 1 PurQ and 2 PurS subunits.

It localises to the cytoplasm. The enzyme catalyses N(2)-formyl-N(1)-(5-phospho-beta-D-ribosyl)glycinamide + L-glutamine + ATP + H2O = 2-formamido-N(1)-(5-O-phospho-beta-D-ribosyl)acetamidine + L-glutamate + ADP + phosphate + H(+). It participates in purine metabolism; IMP biosynthesis via de novo pathway; 5-amino-1-(5-phospho-D-ribosyl)imidazole from N(2)-formyl-N(1)-(5-phospho-D-ribosyl)glycinamide: step 1/2. Its function is as follows. Part of the phosphoribosylformylglycinamidine synthase complex involved in the purines biosynthetic pathway. Catalyzes the ATP-dependent conversion of formylglycinamide ribonucleotide (FGAR) and glutamine to yield formylglycinamidine ribonucleotide (FGAM) and glutamate. The FGAM synthase complex is composed of three subunits. PurQ produces an ammonia molecule by converting glutamine to glutamate. PurL transfers the ammonia molecule to FGAR to form FGAM in an ATP-dependent manner. PurS interacts with PurQ and PurL and is thought to assist in the transfer of the ammonia molecule from PurQ to PurL. This Thermomicrobium roseum (strain ATCC 27502 / DSM 5159 / P-2) protein is Phosphoribosylformylglycinamidine synthase subunit PurL.